Here is a 121-residue protein sequence, read N- to C-terminus: Ubiquitin-related modifier 1 (121 aa).

Glycine 121 carries the post-translational modification 1-thioglycine. Glycine 121 participates in a covalent cross-link: Glycyl lysine isopeptide (Gly-Lys) (interchain with K-? in acceptor proteins).

The protein belongs to the URM1 family. C-terminal thiocarboxylation occurs in 2 steps, it is first acyl-adenylated (-COAMP) via the hesA/moeB/thiF part of UBA4, then thiocarboxylated (-COSH) via the rhodanese domain of UBA4.

It is found in the cytoplasm. The protein operates within tRNA modification; 5-methoxycarbonylmethyl-2-thiouridine-tRNA biosynthesis. Its function is as follows. Acts as a sulfur carrier required for 2-thiolation of mcm(5)S(2)U at tRNA wobble positions of cytosolic tRNA(Lys), tRNA(Glu) and tRNA(Gln). Serves as sulfur donor in tRNA 2-thiolation reaction by being thiocarboxylated (-COSH) at its C-terminus by the MOCS3 homolog UBA4. The sulfur is then transferred to tRNA to form 2-thiolation of mcm(5)S(2)U. Prior mcm(5) tRNA modification by the elongator complex is required for 2-thiolation. Also acts as a ubiquitin-like protein (UBL) that is covalently conjugated via an isopeptide bond to lysine residues of target proteins such as AHP1. The thiocarboxylated form serves as substrate for conjugation and oxidative stress specifically induces the formation of UBL-protein conjugates. The chain is Ubiquitin-related modifier 1 from Ajellomyces capsulatus (strain NAm1 / WU24) (Darling's disease fungus).